The following is a 351-amino-acid chain: Cyanuric acid amidohydrolase (351 aa).

Positions 1–96 (MPSLRAHVFR…HWTVFARETV (96 aa)) are RU A. Substrate contacts are provided by residues Arg53 and 77-78 (SG). Residues 103–240 (ALAIGVSRTP…HEIIVLGMSA (138 aa)) are RU B. Residue Lys153 is part of the active site. Residues Arg185 and 223–224 (SS) contribute to the substrate site. The active-site Nucleophile is the Ser223. Residues 246–351 (LSIDHAVMLD…PVAIIVEKEQ (106 aa)) are RU C. Glu283 is a Mg(2+) binding site. Residues Arg310 and 329 to 330 (SG) contribute to the substrate site. Ala332, Gln335, Gly336, Pro337, and Gly340 together coordinate Mg(2+).

The protein belongs to the cyclic amide hydrolase (CyAH) family. In terms of assembly, homotetramer.

The catalysed reaction is cyanurate + H2O = 1-carboxybiuret + H(+). The protein operates within xenobiotic degradation; atrazine degradation; biuret from cyanurate: step 1/1. Inhibited by barbituric acid. In terms of biological role, responsible for the hydrolysis of cyanuric acid, an intermediate formed during catabolism of s-triazine based compounds in herbicides such as atrazine and polymers such as melamine. Catalyzes the hydrolytic opening of the s-triazine ring of cyanuric acid (2,4,6-trihydroxy-s-triazine) to yield carbon dioxide and carboxybiuret, which spontaneously decarboxylates to biuret. In Rhizobium leguminosarum bv. trifolii (strain WSM1325), this protein is Cyanuric acid amidohydrolase.